The sequence spans 485 residues: UBX domain-containing protein 11 (485 aa).

The interval 1–26 is disordered; sequence MSSPLASLSKTRKVPLESEPVNPGRR. The stretch at 67 to 143 forms a coiled coil; sequence HDSELLTSMA…VGEMERFLND (77 aa). One can recognise an SEP domain in the interval 224–288; sequence LEPIPLKLYR…VSDLRNQVYP (65 aa). Residues 386–463 enclose the UBX domain; it reads PVPPLSMLRI…GLVPNATLLL (78 aa). Residues Ser-479 and Ser-483 each carry the phosphoserine modification.

As to quaternary structure, interacts with GNA12, GNA13, RND1, RND2 and RND3. Strongly expressed in testis. Also expressed in lung, brain and thymus.

It localises to the cytoplasm. Its subcellular location is the cytoskeleton. In terms of biological role, may be involved in the reorganization of actin cytoskeleton mediated by RND1, RND2 and RND3. Promotes RHOA activation mediated by GNA12 and GNA13. In Rattus norvegicus (Rat), this protein is UBX domain-containing protein 11 (Ubxn11).